The following is a 565-amino-acid chain: Protein nucleotidyltransferase YdiU (565 aa).

8 residues coordinate ATP: glycine 118, glycine 120, arginine 121, lysine 141, aspartate 153, glycine 154, arginine 211, and arginine 218. The Proton acceptor role is filled by aspartate 290. Mg(2+)-binding residues include asparagine 291 and aspartate 300. Aspartate 300 provides a ligand contact to ATP.

This sequence belongs to the SELO family. Mg(2+) serves as cofactor. It depends on Mn(2+) as a cofactor.

The enzyme catalyses L-seryl-[protein] + ATP = 3-O-(5'-adenylyl)-L-seryl-[protein] + diphosphate. It catalyses the reaction L-threonyl-[protein] + ATP = 3-O-(5'-adenylyl)-L-threonyl-[protein] + diphosphate. It carries out the reaction L-tyrosyl-[protein] + ATP = O-(5'-adenylyl)-L-tyrosyl-[protein] + diphosphate. The catalysed reaction is L-histidyl-[protein] + UTP = N(tele)-(5'-uridylyl)-L-histidyl-[protein] + diphosphate. The enzyme catalyses L-seryl-[protein] + UTP = O-(5'-uridylyl)-L-seryl-[protein] + diphosphate. It catalyses the reaction L-tyrosyl-[protein] + UTP = O-(5'-uridylyl)-L-tyrosyl-[protein] + diphosphate. Its function is as follows. Nucleotidyltransferase involved in the post-translational modification of proteins. It can catalyze the addition of adenosine monophosphate (AMP) or uridine monophosphate (UMP) to a protein, resulting in modifications known as AMPylation and UMPylation. The chain is Protein nucleotidyltransferase YdiU from Nitrosospira multiformis (strain ATCC 25196 / NCIMB 11849 / C 71).